The following is a 244-amino-acid chain: 7-cyano-7-deazaguanine synthase (244 aa).

14–24 (FSGGQDSATCV) contacts ATP. 4 residues coordinate Zn(2+): C202, C217, C220, and C223.

This sequence belongs to the QueC family. Requires Zn(2+) as cofactor.

The catalysed reaction is 7-carboxy-7-deazaguanine + NH4(+) + ATP = 7-cyano-7-deazaguanine + ADP + phosphate + H2O + H(+). It participates in purine metabolism; 7-cyano-7-deazaguanine biosynthesis. Catalyzes the ATP-dependent conversion of 7-carboxy-7-deazaguanine (CDG) to 7-cyano-7-deazaguanine (preQ(0)). The protein is 7-cyano-7-deazaguanine synthase of Burkholderia lata (strain ATCC 17760 / DSM 23089 / LMG 22485 / NCIMB 9086 / R18194 / 383).